Here is a 784-residue protein sequence, read N- to C-terminus: DNA repair and recombination protein RAD54-like (784 aa).

Residues 1-50 (MRRSLAPSQRGPLRPESRHSFTPPLLKKNKRSCQQELEREQELDRKRQSA) are disordered. The segment at 2–9 (RRSLAPSQ) is required for chromatin remodeling, strand pairing activities and coupling of ATPase activity. S20 is subject to Phosphoserine. T22 carries the post-translational modification Phosphothreonine. Over residues 36-47 (ELEREQELDRKR) the composition is skewed to basic and acidic residues. The 175-residue stretch at 172–346 (EGKRGNFNGC…YSLVNFVNPE (175 aa)) folds into the Helicase ATP-binding domain. Residue 185-192 (DEMGLGKT) coordinates ATP. The short motif at 297–300 (DEGH) is the DEGH box element. The region spanning 503-660 (LLDFMLAAIR…NNESAEKHFT (158 aa)) is the Helicase C-terminal domain. Residues 747–756 (VASAEEAASE) show a composition bias toward low complexity. Residues 747 to 784 (VASAEEAASEQPEEKPDRRKRPSTPLSDDSADEDFLGF) are disordered. The segment covering 775 to 784 (DSADEDFLGF) has biased composition (acidic residues).

The protein belongs to the SNF2/RAD54 helicase family. Interacts (via N-terminus) with spn-A/Rad51.

It localises to the nucleus. In terms of biological role, involved in mitotic DNA repair and meiotic recombination. Functions in the recombinational DNA repair pathway. Essential for interhomolog gene conversion (GC), but may have a less important role in intersister GC than spn-A/Rad51. In the presence of DNA, spn-A/Rad51 enhances the ATPase activity of okr/Rad54. In Drosophila erecta (Fruit fly), this protein is DNA repair and recombination protein RAD54-like.